The following is a 589-amino-acid chain: MNVLSGAMRYATPWRTYRRLLSYAREYRWLLVVAACGALLEAVAGSTFLALMKPITNETFIERNREVALWLPLGIVGLFLLRGIAGYITDMAMGRAARSIARDFRVCVLTKYFRLPGSRFDGEPVASMLVRLGSDSEQVAHAVIDAMKVMVQQTLQVIGALVVMLWYSWTVTLAILLVAPLLAWVMQRVAKRYRRISHHIQESNAQLMQAADQALSNYQDVKVYAAQESELERYARLANINLGLAIKVESTRSLSSAAVQLLGAVGLAMLLLIAGHEALAGRLSPGDFVSLMTSMIAVIPALKQLTNVQNMLQSGIASAQRLFSVLDSPDELDTGRRPLGRARGFIEFRGITARYPGRSAPVLDSVSFVAAPGTVTAIVGRSGSGKSSLIKLIPRFYEPESGQILLDGHPLQDYLLADLRRQIALVGQQVMLFDGSIAENIAYGEMRQVVSEEIERVVVDANAQDFVNQLPEGLQFQVGVKGGRLSGGQRQRLAIARAMLKDAPILILDEATAALDNESERLVQDALQRLMPERTTLVIAHRLSTIKHADQVLVMDQGRIIESGTHVDLLARDGLYAYLYSMQFRERPT.

5 consecutive transmembrane segments (helical) span residues 29-49 (WLLV…STFL), 68-88 (ALWL…AGYI), 157-177 (VIGA…AILL), 254-274 (LSSA…LLIA), and 283-303 (LSPG…PALK). Positions 32-314 (VVAACGALLE…LTNVQNMLQS (283 aa)) constitute an ABC transmembrane type-1 domain. Residues 346–582 (IEFRGITARY…DGLYAYLYSM (237 aa)) enclose the ABC transporter domain. 380–387 (GRSGSGKS) is a binding site for ATP.

Belongs to the ABC transporter superfamily. Lipid exporter (TC 3.A.1.106) family. Homodimer.

The protein resides in the cell inner membrane. The enzyme catalyses ATP + H2O + lipid A-core oligosaccharideSide 1 = ADP + phosphate + lipid A-core oligosaccharideSide 2.. Involved in lipopolysaccharide (LPS) biosynthesis. Translocates lipid A-core from the inner to the outer leaflet of the inner membrane. Transmembrane domains (TMD) form a pore in the inner membrane and the ATP-binding domain (NBD) is responsible for energy generation. This Xylella fastidiosa (strain 9a5c) protein is ATP-dependent lipid A-core flippase.